A 164-amino-acid chain; its full sequence is UPF0304 protein HSM_1818 (164 aa).

It belongs to the UPF0304 family.

The protein is UPF0304 protein HSM_1818 of Histophilus somni (strain 2336) (Haemophilus somnus).